The sequence spans 143 residues: Transcriptional regulator MraZ (143 aa).

SpoVT-AbrB domains lie at 5-47 (TYTP…PREE) and 76-119 (ADEQ…DAAA).

Belongs to the MraZ family. In terms of assembly, forms oligomers.

The protein localises to the cytoplasm. It is found in the nucleoid. The protein is Transcriptional regulator MraZ of Corynebacterium diphtheriae (strain ATCC 700971 / NCTC 13129 / Biotype gravis).